The following is a 98-amino-acid chain: NADH-ubiquinone oxidoreductase chain 4L (98 aa).

Helical transmembrane passes span 2–22, 29–49, and 61–81; these read LSISININLAFAAALLGMLMF, SLLCLEGMMLSMFILSTLIIL, and ILLLVFAACEAAIGLALLVMV.

The protein belongs to the complex I subunit 4L family. As to quaternary structure, core subunit of respiratory chain NADH dehydrogenase (Complex I) which is composed of 45 different subunits.

The protein resides in the mitochondrion inner membrane. It carries out the reaction a ubiquinone + NADH + 5 H(+)(in) = a ubiquinol + NAD(+) + 4 H(+)(out). In terms of biological role, core subunit of the mitochondrial membrane respiratory chain NADH dehydrogenase (Complex I) which catalyzes electron transfer from NADH through the respiratory chain, using ubiquinone as an electron acceptor. Part of the enzyme membrane arm which is embedded in the lipid bilayer and involved in proton translocation. In Microcebus ravelobensis (Golden-brown mouse lemur), this protein is NADH-ubiquinone oxidoreductase chain 4L (MT-ND4L).